The following is a 75-amino-acid chain: Accessory gland-specific peptide 57Da (75 aa).

Positions 1–19 are cleaved as a signal peptide; the sequence is MKFLALFVTLLVVLALVSA. Positions 55 to 75 are disordered; that stretch reads AAPAAAPAAPEAGLADAPAES. Residues 56 to 75 show a composition bias toward low complexity; sequence APAAAPAAPEAGLADAPAES.

As to expression, lumen fluid of male accessory glands, becomes seminal fluid.

It is found in the secreted. Functionally, transferred from male to female during mating and may affect egglaying and behavior after mating. This chain is Accessory gland-specific peptide 57Da (Mst57Da), found in Drosophila melanogaster (Fruit fly).